The sequence spans 89 residues: Acylphosphatase (89 aa).

Residues 3 to 89 (RMTAWVHGFV…RGDLTGFVER (87 aa)) enclose the Acylphosphatase-like domain. Residues arginine 18 and asparagine 36 contribute to the active site.

Belongs to the acylphosphatase family.

It carries out the reaction an acyl phosphate + H2O = a carboxylate + phosphate + H(+). The sequence is that of Acylphosphatase (acyP) from Rhodococcus jostii (strain RHA1).